The chain runs to 156 residues: 17.4 kDa class I heat shock protein (156 aa).

Residues 42–156 enclose the sHSP domain; it reads DVAAFTNAKV…PEVKSVDISG (115 aa).

It belongs to the small heat shock protein (HSP20) family. In terms of assembly, may form oligomeric structures. Binds to AKR2A.

It localises to the cytoplasm. This is 17.4 kDa class I heat shock protein (HSP17.4A) from Arabidopsis thaliana (Mouse-ear cress).